The following is a 282-amino-acid chain: Nucleotide-binding protein Fnod_1159 (282 aa).

ATP is bound at residue 9 to 16 (GHSGAGKS). Residue 57–60 (DIRS) coordinates GTP.

It belongs to the RapZ-like family.

Displays ATPase and GTPase activities. In Fervidobacterium nodosum (strain ATCC 35602 / DSM 5306 / Rt17-B1), this protein is Nucleotide-binding protein Fnod_1159.